Consider the following 378-residue polypeptide: D-alanine--D-alanine ligase (378 aa).

The ATP-grasp domain maps to 140-346 (KKIISQAGIR…YSDLIDRLIQ (207 aa)). 170–225 (EEKLGNLTFVKPAKQGSSVGIHRVTNAEEYEKALDDAFKYDYKILVEQGIANPQEI) is an ATP binding site. The Mg(2+) site is built by aspartate 300, glutamate 313, and asparagine 315.

Belongs to the D-alanine--D-alanine ligase family. Requires Mg(2+) as cofactor. It depends on Mn(2+) as a cofactor.

It is found in the cytoplasm. The catalysed reaction is 2 D-alanine + ATP = D-alanyl-D-alanine + ADP + phosphate + H(+). The protein operates within cell wall biogenesis; peptidoglycan biosynthesis. Its function is as follows. Cell wall formation. This is D-alanine--D-alanine ligase from Limosilactobacillus reuteri (strain DSM 20016) (Lactobacillus reuteri).